Consider the following 246-residue polypeptide: Proteasome subunit alpha (246 aa).

This sequence belongs to the peptidase T1A family. As to quaternary structure, the 20S proteasome core is composed of 14 alpha and 14 beta subunits that assemble into four stacked heptameric rings, resulting in a barrel-shaped structure. The two inner rings, each composed of seven catalytic beta subunits, are sandwiched by two outer rings, each composed of seven alpha subunits. The catalytic chamber with the active sites is on the inside of the barrel. Has a gated structure, the ends of the cylinder being occluded by the N-termini of the alpha-subunits. Is capped at one or both ends by the proteasome regulatory ATPase, PAN.

It is found in the cytoplasm. With respect to regulation, the formation of the proteasomal ATPase PAN-20S proteasome complex, via the docking of the C-termini of PAN into the intersubunit pockets in the alpha-rings, triggers opening of the gate for substrate entry. Interconversion between the open-gate and close-gate conformations leads to a dynamic regulation of the 20S proteasome proteolysis activity. Its function is as follows. Component of the proteasome core, a large protease complex with broad specificity involved in protein degradation. The polypeptide is Proteasome subunit alpha (Methanopyrus kandleri (strain AV19 / DSM 6324 / JCM 9639 / NBRC 100938)).